We begin with the raw amino-acid sequence, 205 residues long: DNA-directed RNA polymerase RPB5 homolog (205 aa).

The protein belongs to the archaeal RpoH/eukaryotic RPB5 RNA polymerase subunit family. In terms of assembly, part of the viral DNA-directed RNA polymerase that consists of 8 polII-like subunits (RPB1, RPB2, RPB3, RPB5, RPB6, RPB7, RPB9, RPB10), a capping enzyme and a termination factor.

Its subcellular location is the host cytoplasm. The protein localises to the virion. Component of the DNA-directed RNA polymerase (RNAP) that catalyzes the transcription in the cytoplasm of viral DNA into RNA using the four ribonucleoside triphosphates as substrates. The protein is DNA-directed RNA polymerase RPB5 homolog of Ornithodoros (relapsing fever ticks).